We begin with the raw amino-acid sequence, 487 residues long: Bifunctional protein GlmU (487 aa).

The segment at M1–R235 is pyrophosphorylase. UDP-N-acetyl-alpha-D-glucosamine is bound by residues L13 to G16, K27, Q82, G87 to T88, S110 to D112, G147, E162, N177, and N233. D112 contributes to the Mg(2+) binding site. Position 233 (N233) interacts with Mg(2+). The linker stretch occupies residues E236–S256. An N-acetyltransferase region spans residues G257–S487. UDP-N-acetyl-alpha-D-glucosamine is bound by residues R339 and K357. H369 acts as the Proton acceptor in catalysis. Residues Y372 and N383 each contribute to the UDP-N-acetyl-alpha-D-glucosamine site. Residues A386, N392–Y393, S411, A429, and R446 each bind acetyl-CoA. Residues E453–S487 are disordered. Low complexity predominate over residues A468 to P481.

In the N-terminal section; belongs to the N-acetylglucosamine-1-phosphate uridyltransferase family. The protein in the C-terminal section; belongs to the transferase hexapeptide repeat family. As to quaternary structure, homotrimer. The cofactor is Mg(2+).

Its subcellular location is the cytoplasm. It carries out the reaction alpha-D-glucosamine 1-phosphate + acetyl-CoA = N-acetyl-alpha-D-glucosamine 1-phosphate + CoA + H(+). It catalyses the reaction N-acetyl-alpha-D-glucosamine 1-phosphate + UTP + H(+) = UDP-N-acetyl-alpha-D-glucosamine + diphosphate. It functions in the pathway nucleotide-sugar biosynthesis; UDP-N-acetyl-alpha-D-glucosamine biosynthesis; N-acetyl-alpha-D-glucosamine 1-phosphate from alpha-D-glucosamine 6-phosphate (route II): step 2/2. Its pathway is nucleotide-sugar biosynthesis; UDP-N-acetyl-alpha-D-glucosamine biosynthesis; UDP-N-acetyl-alpha-D-glucosamine from N-acetyl-alpha-D-glucosamine 1-phosphate: step 1/1. It participates in bacterial outer membrane biogenesis; LPS lipid A biosynthesis. Catalyzes the last two sequential reactions in the de novo biosynthetic pathway for UDP-N-acetylglucosamine (UDP-GlcNAc). The C-terminal domain catalyzes the transfer of acetyl group from acetyl coenzyme A to glucosamine-1-phosphate (GlcN-1-P) to produce N-acetylglucosamine-1-phosphate (GlcNAc-1-P), which is converted into UDP-GlcNAc by the transfer of uridine 5-monophosphate (from uridine 5-triphosphate), a reaction catalyzed by the N-terminal domain. This is Bifunctional protein GlmU from Anaeromyxobacter sp. (strain Fw109-5).